The chain runs to 96 residues: UPF0235 protein Helmi_20270 (96 aa).

This sequence belongs to the UPF0235 family.

In Heliobacterium modesticaldum (strain ATCC 51547 / Ice1), this protein is UPF0235 protein Helmi_20270.